Here is a 171-residue protein sequence, read N- to C-terminus: Allophycocyanin subunit beta-18 (171 aa).

N72 is modified (N4-methylasparagine). C82 lines the (2R,3E)-phycocyanobilin pocket.

This sequence belongs to the phycobiliprotein family. Heterodimer of an alpha and a beta chain. Post-translationally, contains one covalently linked bilin chromophore.

It is found in the plastid. It localises to the chloroplast thylakoid membrane. In terms of biological role, light-harvesting photosynthetic bile pigment-protein from the phycobiliprotein complex. Allophycocyanin has a maximum absorption at approximately 650 nanometers. The protein is Allophycocyanin subunit beta-18 (apcF) of Aglaothamnion neglectum (Red alga).